Here is a 189-residue protein sequence, read N- to C-terminus: dCTP deaminase (189 aa).

DCTP contacts are provided by residues 112–117, 136–138, glutamine 157, tyrosine 171, and glutamine 181; these read KSTYAR and TLE. Catalysis depends on glutamate 138, which acts as the Proton donor/acceptor.

Belongs to the dCTP deaminase family. Homotrimer.

It catalyses the reaction dCTP + H2O + H(+) = dUTP + NH4(+). The protein operates within pyrimidine metabolism; dUMP biosynthesis; dUMP from dCTP (dUTP route): step 1/2. Functionally, catalyzes the deamination of dCTP to dUTP. This Albidiferax ferrireducens (strain ATCC BAA-621 / DSM 15236 / T118) (Rhodoferax ferrireducens) protein is dCTP deaminase.